The sequence spans 998 residues: Bifunctional glutamine synthetase adenylyltransferase/adenylyl-removing enzyme (998 aa).

The adenylyl removase stretch occupies residues 1–487; it reads MVVTKPATQR…LHAKLFYQPL (487 aa). Positions 492–998 are adenylyl transferase; that stretch reads GPAGLEIRHG…KAVVRKVFGS (507 aa).

Belongs to the GlnE family. The cofactor is Mg(2+).

It carries out the reaction [glutamine synthetase]-O(4)-(5'-adenylyl)-L-tyrosine + phosphate = [glutamine synthetase]-L-tyrosine + ADP. It catalyses the reaction [glutamine synthetase]-L-tyrosine + ATP = [glutamine synthetase]-O(4)-(5'-adenylyl)-L-tyrosine + diphosphate. In terms of biological role, involved in the regulation of glutamine synthetase GlnA, a key enzyme in the process to assimilate ammonia. When cellular nitrogen levels are high, the C-terminal adenylyl transferase (AT) inactivates GlnA by covalent transfer of an adenylyl group from ATP to specific tyrosine residue of GlnA, thus reducing its activity. Conversely, when nitrogen levels are low, the N-terminal adenylyl removase (AR) activates GlnA by removing the adenylyl group by phosphorolysis, increasing its activity. The regulatory region of GlnE binds the signal transduction protein PII (GlnB) which indicates the nitrogen status of the cell. In Mycobacterium avium (strain 104), this protein is Bifunctional glutamine synthetase adenylyltransferase/adenylyl-removing enzyme.